The primary structure comprises 531 residues: GMP synthase [glutamine-hydrolyzing] (531 aa).

The 194-residue stretch at 20 to 213 folds into the Glutamine amidotransferase type-1 domain; that stretch reads KILIVDFGSQ…VRKVAGLKGD (194 aa). The Nucleophile role is filled by Cys97. Residues His187 and Glu189 contribute to the active site. One can recognise a GMPS ATP-PPase domain in the interval 214–406; the sequence is WTMRAFREEA…LGLPDVFVGR (193 aa). 241-247 is a binding site for ATP; that stretch reads SGGVDSA.

As to quaternary structure, homodimer.

The catalysed reaction is XMP + L-glutamine + ATP + H2O = GMP + L-glutamate + AMP + diphosphate + 2 H(+). The protein operates within purine metabolism; GMP biosynthesis; GMP from XMP (L-Gln route): step 1/1. Its function is as follows. Catalyzes the synthesis of GMP from XMP. This chain is GMP synthase [glutamine-hydrolyzing], found in Afipia carboxidovorans (strain ATCC 49405 / DSM 1227 / KCTC 32145 / OM5) (Oligotropha carboxidovorans).